The following is a 241-amino-acid chain: Large ribosomal subunit protein uL1 (241 aa).

This sequence belongs to the universal ribosomal protein uL1 family. As to quaternary structure, part of the 50S ribosomal subunit.

Functionally, binds directly to 23S rRNA. The L1 stalk is quite mobile in the ribosome, and is involved in E site tRNA release. In terms of biological role, protein L1 is also a translational repressor protein, it controls the translation of the L11 operon by binding to its mRNA. This chain is Large ribosomal subunit protein uL1, found in Streptomyces coelicolor (strain ATCC BAA-471 / A3(2) / M145).